We begin with the raw amino-acid sequence, 116 residues long: G antigen 2A (116 aa).

Residues 1-116 (MSWRGRSTYR…PEEGEKQSQC (116 aa)) form a disordered region. 2 stretches are compositionally biased toward acidic residues: residues 31–44 (FSDE…EEGE) and 86–95 (ECEDGPDGQE). The span at 102-116 (EEVKTPEEGEKQSQC) shows a compositional bias: basic and acidic residues.

The protein belongs to the GAGE family.

This is G antigen 2A (GAGE2A) from Homo sapiens (Human).